The primary structure comprises 529 residues: Phenylalanine N-monooxygenase (529 aa).

The helical transmembrane segment at 1–21 (MLDSTPMLAFIIGLLLLALTM) threads the bilayer. C467 provides a ligand contact to heme.

It belongs to the cytochrome P450 family. It depends on heme as a cofactor.

It is found in the endoplasmic reticulum membrane. The catalysed reaction is L-phenylalanine + 2 reduced [NADPH--hemoprotein reductase] + 2 O2 = (E)-phenylacetaldehyde oxime + 2 oxidized [NADPH--hemoprotein reductase] + CO2 + 3 H2O + 2 H(+). It functions in the pathway secondary metabolite biosynthesis; phenylglucosinolate biosynthesis. Its function is as follows. Converts L-phenylalanine into phenylacetaldoxime, the precursor of benzylglucosinolate (glucotropeolin). The sequence is that of Phenylalanine N-monooxygenase (CYP79A2) from Arabidopsis thaliana (Mouse-ear cress).